A 156-amino-acid polypeptide reads, in one-letter code: Ribosomal RNA large subunit methyltransferase H (156 aa).

Residues Leu73, Gly104, and 123–128 contribute to the S-adenosyl-L-methionine site; that span reads ISSMTL.

It belongs to the RNA methyltransferase RlmH family. In terms of assembly, homodimer.

It localises to the cytoplasm. It carries out the reaction pseudouridine(1915) in 23S rRNA + S-adenosyl-L-methionine = N(3)-methylpseudouridine(1915) in 23S rRNA + S-adenosyl-L-homocysteine + H(+). In terms of biological role, specifically methylates the pseudouridine at position 1915 (m3Psi1915) in 23S rRNA. The polypeptide is Ribosomal RNA large subunit methyltransferase H (Burkholderia ambifaria (strain ATCC BAA-244 / DSM 16087 / CCUG 44356 / LMG 19182 / AMMD) (Burkholderia cepacia (strain AMMD))).